The chain runs to 108 residues: Mitochondrial import inner membrane translocase subunit tim-13 (108 aa).

Positions 45 to 68 (CTNKCITAPGSSLASGEKQCLQRC) match the Twin CX3C motif motif. Intrachain disulfides connect Cys45-Cys68 and Cys49-Cys64. A disordered region spans residues 89–108 (EEMASSGGMGGGFGQGPSFS). Gly residues predominate over residues 95–108 (GGMGGGFGQGPSFS).

It belongs to the small Tim family. In terms of assembly, heterohexamer; composed of 3 copies of tim-8/ddp-1 and 3 copies of tin-13/tim-13, named soluble 70 kDa complex. Associates with the TIM22 complex, whose core is composed of tim-22.

The protein resides in the mitochondrion inner membrane. Mitochondrial intermembrane chaperone that participates in the import and insertion of some multi-pass transmembrane proteins into the mitochondrial inner membrane. Also required for the transfer of beta-barrel precursors from the TOM complex to the sorting and assembly machinery (SAM complex) of the outer membrane. Acts as a chaperone-like protein that protects the hydrophobic precursors from aggregation and guide them through the mitochondrial intermembrane space. The tim-8-tim-13 complex mediates the import of some proteins while the predominant tim-9/tin-9.1-tim-10/tin-10 70 kDa complex mediates the import of much more proteins. The polypeptide is Mitochondrial import inner membrane translocase subunit tim-13 (tin-13) (Caenorhabditis elegans).